A 299-amino-acid chain; its full sequence is Urease accessory protein UreD (299 aa).

Belongs to the UreD family. UreD, UreF and UreG form a complex that acts as a GTP-hydrolysis-dependent molecular chaperone, activating the urease apoprotein by helping to assemble the nickel containing metallocenter of UreC. The UreE protein probably delivers the nickel.

The protein localises to the cytoplasm. Its function is as follows. Required for maturation of urease via the functional incorporation of the urease nickel metallocenter. This Natronomonas pharaonis (strain ATCC 35678 / DSM 2160 / CIP 103997 / JCM 8858 / NBRC 14720 / NCIMB 2260 / Gabara) (Halobacterium pharaonis) protein is Urease accessory protein UreD.